An 89-amino-acid polypeptide reads, in one-letter code: Small ribosomal subunit protein uS15 (89 aa).

The span at 1–11 shows a compositional bias: basic and acidic residues; the sequence is MSIAAERKAEV. Residues 1–24 are disordered; sequence MSIAAERKAEVIKTNATKAGDTGS.

The protein belongs to the universal ribosomal protein uS15 family. As to quaternary structure, part of the 30S ribosomal subunit. Forms a bridge to the 50S subunit in the 70S ribosome, contacting the 23S rRNA.

Functionally, one of the primary rRNA binding proteins, it binds directly to 16S rRNA where it helps nucleate assembly of the platform of the 30S subunit by binding and bridging several RNA helices of the 16S rRNA. Its function is as follows. Forms an intersubunit bridge (bridge B4) with the 23S rRNA of the 50S subunit in the ribosome. The sequence is that of Small ribosomal subunit protein uS15 from Bradyrhizobium diazoefficiens (strain JCM 10833 / BCRC 13528 / IAM 13628 / NBRC 14792 / USDA 110).